The sequence spans 129 residues: Ribonuclease P protein component (129 aa).

The protein belongs to the RnpA family. In terms of assembly, consists of a catalytic RNA component (M1 or rnpB) and a protein subunit.

The enzyme catalyses Endonucleolytic cleavage of RNA, removing 5'-extranucleotides from tRNA precursor.. Its function is as follows. RNaseP catalyzes the removal of the 5'-leader sequence from pre-tRNA to produce the mature 5'-terminus. It can also cleave other RNA substrates such as 4.5S RNA. The protein component plays an auxiliary but essential role in vivo by binding to the 5'-leader sequence and broadening the substrate specificity of the ribozyme. This chain is Ribonuclease P protein component, found in Corynebacterium jeikeium (strain K411).